We begin with the raw amino-acid sequence, 129 residues long: V-type proton ATPase subunit F 2 (129 aa).

Belongs to the V-ATPase F subunit family. As to quaternary structure, V-ATPase is a heteromultimeric enzyme made up of two complexes: the ATP-hydrolytic V1 complex and the proton translocation V0 complex. The V1 complex consists of three catalytic AB heterodimers that form a heterohexamer, three peripheral stalks each consisting of EG heterodimers, one central rotor including subunits D and F, and the regulatory subunits C and H. The proton translocation complex V0 consists of the proton transport subunit a, a ring of proteolipid subunits c9c'', rotary subunit d, subunits e and f, and the accessory subunits VhaAC45 and ATP6AP2.

Functionally, subunit of the V1 complex of vacuolar(H+)-ATPase (V-ATPase), a multisubunit enzyme composed of a peripheral complex (V1) that hydrolyzes ATP and a membrane integral complex (V0) that translocates protons. V-ATPase is responsible for acidifying and maintaining the pH of intracellular compartments and in some cell types, is targeted to the plasma membrane, where it is responsible for acidifying the extracellular environment. This chain is V-type proton ATPase subunit F 2 (Vha14-2), found in Drosophila melanogaster (Fruit fly).